A 174-amino-acid chain; its full sequence is 2-oxo-4-hydroxy-4-carboxy-5-ureidoimidazoline decarboxylase (174 aa).

His67 functions as the Proton donor in the catalytic mechanism. Residues Pro68, 84–88 (SQEEQ), and 119–123 (FVICA) contribute to the substrate site. The Microbody targeting signal signature appears at 172-174 (TKL).

This sequence belongs to the OHCU decarboxylase family. As to quaternary structure, homodimer.

The protein resides in the peroxisome. The enzyme catalyses 5-hydroxy-2-oxo-4-ureido-2,5-dihydro-1H-imidazole-5-carboxylate + H(+) = (S)-allantoin + CO2. The protein operates within purine metabolism; urate degradation; (S)-allantoin from urate: step 3/3. Its function is as follows. Catalyzes the stereoselective decarboxylation of 2-oxo-4-hydroxy-4-carboxy-5-ureidoimidazoline (OHCU) to (S)-allantoin. This is 2-oxo-4-hydroxy-4-carboxy-5-ureidoimidazoline decarboxylase (urad) from Danio rerio (Zebrafish).